Reading from the N-terminus, the 360-residue chain is Ribosomal RNA large subunit methyltransferase M (360 aa).

S-adenosyl-L-methionine is bound by residues serine 187, 220 to 223 (CPGG), aspartate 239, aspartate 259, and aspartate 276. Lysine 305 functions as the Proton acceptor in the catalytic mechanism.

The protein belongs to the class I-like SAM-binding methyltransferase superfamily. RNA methyltransferase RlmE family. RlmM subfamily. As to quaternary structure, monomer.

Its subcellular location is the cytoplasm. It carries out the reaction cytidine(2498) in 23S rRNA + S-adenosyl-L-methionine = 2'-O-methylcytidine(2498) in 23S rRNA + S-adenosyl-L-homocysteine + H(+). Its function is as follows. Catalyzes the 2'-O-methylation at nucleotide C2498 in 23S rRNA. This Photobacterium profundum (strain SS9) protein is Ribosomal RNA large subunit methyltransferase M.